A 161-amino-acid polypeptide reads, in one-letter code: Troponin C, slow skeletal and cardiac muscles (161 aa).

Met1 bears the N-acetylmethionine mark. EF-hand domains follow at residues 16–51, 52–87, 92–127, and 128–161; these read QKNEFKAAFDIFVLGAEDGCISTKELGKVMRMLGQN, PTPEELQEMIDEVDEDGSGTVDFDEFLVMMVRCMKD, KTEEELSDLFRMFDKNADGYIDLEELKIMLQATGET, and ITEDDIEELMKDGDKNNDGRIDYDEFLEFMKGVE. Residues Asp65, Asp67, Ser69, Thr71, Glu76, Asp105, Asn107, Asp109, Tyr111, Glu116, Asp141, Asn143, Asp145, Arg147, and Glu152 each contribute to the Ca(2+) site.

This sequence belongs to the troponin C family.

Troponin is the central regulatory protein of striated muscle contraction. Tn consists of three components: Tn-I which is the inhibitor of actomyosin ATPase, Tn-T which contains the binding site for tropomyosin and Tn-C. The binding of calcium to Tn-C abolishes the inhibitory action of Tn on actin filaments. The protein is Troponin C, slow skeletal and cardiac muscles (TNNC1) of Gallus gallus (Chicken).